Reading from the N-terminus, the 81-residue chain is Cytochrome b559 subunit alpha (81 aa).

The chain crosses the membrane as a helical span at residues 22–36 (VIHSITIPSLFIAGW). Histidine 24 provides a ligand contact to heme.

The protein belongs to the PsbE/PsbF family. As to quaternary structure, heterodimer of an alpha subunit and a beta subunit. PSII is composed of 1 copy each of membrane proteins PsbA, PsbB, PsbC, PsbD, PsbE, PsbF, PsbH, PsbI, PsbJ, PsbK, PsbL, PsbM, PsbT, PsbX, PsbY, PsbZ, Psb30/Ycf12, at least 3 peripheral proteins of the oxygen-evolving complex and a large number of cofactors. It forms dimeric complexes. The cofactor is heme b.

Its subcellular location is the plastid. The protein localises to the chloroplast thylakoid membrane. Functionally, this b-type cytochrome is tightly associated with the reaction center of photosystem II (PSII). PSII is a light-driven water:plastoquinone oxidoreductase that uses light energy to abstract electrons from H(2)O, generating O(2) and a proton gradient subsequently used for ATP formation. It consists of a core antenna complex that captures photons, and an electron transfer chain that converts photonic excitation into a charge separation. The polypeptide is Cytochrome b559 subunit alpha (Cyanidioschyzon merolae (strain NIES-3377 / 10D) (Unicellular red alga)).